The chain runs to 338 residues: Solute carrier family 35 member G3 (338 aa).

The segment at 1 to 24 (MAGSHPYFNQPDSTHPSPPSAPPS) is disordered. 9 consecutive transmembrane segments (helical) span residues 37–57 (TSGLLVALLGGGLPAGFVGPL), 67–87 (LPSLELLIWRCLFHLPIALLL), 105–125 (FFCALLNILSIGCAYSAVQVV), 160–180 (CGLLGCILGLIIIVGPGLWTL), 185–205 (TGVYTALGYVEAFLGGLALSL), 221–241 (TVAFLSGLVGLLGSVPGLFVL), 250–270 (LLSWSCVGAVGILALVSFTCV), 281–301 (LVCAVLHSEVVVALILQYYML), and 305–325 (VAPSDIVAAGVVLGSIAIITA). In terms of domain architecture, EamA 1 spans 49 to 174 (LPAGFVGPLS…CILGLIIIVG (126 aa)). The region spanning 272–325 (YAVTKAHPALVCAVLHSEVVVALILQYYMLHETVAPSDIVAAGVVLGSIAIITA) is the EamA 2 domain.

The protein belongs to the SLC35G solute transporter family. Expressed in testis.

The protein localises to the membrane. The chain is Solute carrier family 35 member G3 (SLC35G3) from Homo sapiens (Human).